An 80-amino-acid chain; its full sequence is Cell division protein ZapB (80 aa).

Residues 3 to 80 (FEVLEQLESK…ALLGKMDEVE (78 aa)) are a coiled coil. Over residues 41–53 (ANELRSQREELEQ) the composition is skewed to basic and acidic residues. The tract at residues 41–60 (ANELRSQREELEQKSQQAQQ) is disordered.

The protein belongs to the ZapB family. In terms of assembly, homodimer. The ends of the coiled-coil dimer bind to each other, forming polymers. Interacts with FtsZ.

The protein localises to the cytoplasm. Non-essential, abundant cell division factor that is required for proper Z-ring formation. It is recruited early to the divisome by direct interaction with FtsZ, stimulating Z-ring assembly and thereby promoting cell division earlier in the cell cycle. Its recruitment to the Z-ring requires functional FtsA or ZipA. This is Cell division protein ZapB from Vibrio campbellii (strain ATCC BAA-1116).